The following is a 339-amino-acid chain: Ketol-acid reductoisomerase (NADP(+)) (339 aa).

In terms of domain architecture, KARI N-terminal Rossmann spans 1–182; it reads MRVYYDRDAD…GGGRSGIIET (182 aa). Residues 24-27, K48, S51, T53, and 83-86 contribute to the NADP(+) site; these read YGSQ and DELQ. The active site involves H108. G134 provides a ligand contact to NADP(+). The region spanning 183-328 is the KARI C-terminal knotted domain; that stretch reads NFKEECETDL…AKLRGMMPWI (146 aa). D191, E195, E227, and E231 together coordinate Mg(2+). S252 lines the substrate pocket.

It belongs to the ketol-acid reductoisomerase family. The cofactor is Mg(2+).

The enzyme catalyses (2R)-2,3-dihydroxy-3-methylbutanoate + NADP(+) = (2S)-2-acetolactate + NADPH + H(+). It carries out the reaction (2R,3R)-2,3-dihydroxy-3-methylpentanoate + NADP(+) = (S)-2-ethyl-2-hydroxy-3-oxobutanoate + NADPH + H(+). It functions in the pathway amino-acid biosynthesis; L-isoleucine biosynthesis; L-isoleucine from 2-oxobutanoate: step 2/4. Its pathway is amino-acid biosynthesis; L-valine biosynthesis; L-valine from pyruvate: step 2/4. In terms of biological role, involved in the biosynthesis of branched-chain amino acids (BCAA). Catalyzes an alkyl-migration followed by a ketol-acid reduction of (S)-2-acetolactate (S2AL) to yield (R)-2,3-dihydroxy-isovalerate. In the isomerase reaction, S2AL is rearranged via a Mg-dependent methyl migration to produce 3-hydroxy-3-methyl-2-ketobutyrate (HMKB). In the reductase reaction, this 2-ketoacid undergoes a metal-dependent reduction by NADPH to yield (R)-2,3-dihydroxy-isovalerate. The polypeptide is Ketol-acid reductoisomerase (NADP(+)) (Sinorhizobium fredii (strain NBRC 101917 / NGR234)).